Consider the following 634-residue polypeptide: MFFYEKFDIIVIGAGHAGTEAASASSRMGQKTLLITQKRSTIGTLSCNPAIGGLGKSQLVKEIDALGGLMAKVIDYSGIQFRILNSKKGYAVRSTRAQADRFLYQKNMNYFLNNQKNLTIFEQEVSDIIIKNYQVQGIITSDGKIFKSSIVILTAGTFLNGKMYIGSDVFDGGRRNDVSASILANNLKKYFSKIGRLKTGTPPRLKKKSINFDILKKQYGDYPTPVFSFLGKIEQHPKQVPCYITYTNDHTHSIIKKNLHLSPLYSGSITGIGPRYCPSIEDKIIKFPDKISHQIFLEPEGINSEIIYPNGISTSLPKDIQVDLIQSISGLENAHIVHSGYAVEYDYFDPRDLKMTLESKKIKNLFMAGQINGTTGYEEAAAQGLIAGLNAALKIQCKDTWYPKRNEAYIGVLIDDLCSKGTSEPYRMFTSRAEYRLLLRENNADERLTTIGYKLGLIDDFRWKIFSKKQDSISRERNRLKNIILQPKTVFFSSNNKKTIYLKKKCTAFDLLRRPEISYNDLILFLNSFLKKKIVIKNKEITEEIETQSKYFGYIQRQEKEIKKYKYYENKKLYCIKDYREILGLSNEAIIKLNKYRPSSIGQALRISGITPVTISILLIFLKKRKKKKFYFKK.

Position 13 to 18 (13 to 18 (GAGHAG)) interacts with FAD. Residue 273–287 (GPRYCPSIEDKIIKF) participates in NAD(+) binding.

Belongs to the MnmG family. As to quaternary structure, homodimer. Heterotetramer of two MnmE and two MnmG subunits. Requires FAD as cofactor.

The protein resides in the cytoplasm. NAD-binding protein involved in the addition of a carboxymethylaminomethyl (cmnm) group at the wobble position (U34) of certain tRNAs, forming tRNA-cmnm(5)s(2)U34. The chain is tRNA uridine 5-carboxymethylaminomethyl modification enzyme MnmG from Buchnera aphidicola subsp. Cinara cedri (strain Cc).